Here is a 126-residue protein sequence, read N- to C-terminus: 13 kDa ribonucleoprotein-associated protein (126 aa).

Belongs to the eukaryotic ribosomal protein eL8 family. As to quaternary structure, component of the U3 snoRNP particle. Binds to the C'/D and B/C motifs in U3 snoRNA. Component of the 25S U4/U6.U5 tri-snRNP particle, a subcomplex of the spliceosome. Binds to the 5' stem-loop of U4 snRNA.

It is found in the nucleus. It localises to the nucleolus. Its function is as follows. Common component of the spliceosome and rRNA processing machinery. In association with the spliceosomal U4/U6.U5 tri-snRNP particle, required for splicing of pre-mRNA. In association with box C/D snoRNPs, required for processing of pre-ribosomal RNA (rRNA) and site-specific 2'-O-methylation of substrate RNAs. Essential for the accumulation and stability of U4 snRNA, U6 snRNA, and box C/D snoRNAs. The chain is 13 kDa ribonucleoprotein-associated protein (SNU13) from Candida glabrata (strain ATCC 2001 / BCRC 20586 / JCM 3761 / NBRC 0622 / NRRL Y-65 / CBS 138) (Yeast).